A 430-amino-acid chain; its full sequence is MGYLFTSESVSEGHPDKVADQISDAVLDKLLAYDPSSKVACETLVTTGQVVLAGEVKTKAYVDLQLIAREVIKKIGYTKGEYMFESNSCGVLSAIHEQSPDINRGVERQDPMEQGAGDQGMMFGYATNETENYMPLSLDLAHRILQVLADIRREEKVMTYLRPDAKSQVTIEYDDNGTPVRIDTIVVSTQHDDFIQPADDSAEAQLKADEEMLSIIRRDVIEILMPRVIASIHHDKVLALFNDQIVYHVNPTGKFVIGGPHGDTGLTGRKIIVDTYGGKGAHGGGAFSGKDPSKVDRSAAYAARHIAKNMVAAGVADEMLVQVSYAIGVARPINIFVDTYGRSHVNMTDGEIARVIDQLFDLRPKAIEERLKLRNPIYQETAAYGHMGREPQVVSKTFFSRYEGNKTVEVELFTWEKLDYVDKIKAAFGL.

H14 provides a ligand contact to ATP. Mg(2+) is bound at residue D16. Residue E42 participates in K(+) binding. The L-methionine site is built by E55 and Q98. Positions 98 to 108 are flexible loop; it reads QSPDINRGVER. ATP contacts are provided by residues 164–166, 254–255, D263, 269–270, A286, and K290; these read DAK, KF, and RK. D263 is an L-methionine binding site. Residue K294 coordinates L-methionine.

It belongs to the AdoMet synthase family. As to quaternary structure, homotetramer; dimer of dimers. The cofactor is Mg(2+). It depends on K(+) as a cofactor.

Its subcellular location is the cytoplasm. The catalysed reaction is L-methionine + ATP + H2O = S-adenosyl-L-methionine + phosphate + diphosphate. It participates in amino-acid biosynthesis; S-adenosyl-L-methionine biosynthesis; S-adenosyl-L-methionine from L-methionine: step 1/1. Catalyzes the formation of S-adenosylmethionine (AdoMet) from methionine and ATP. The overall synthetic reaction is composed of two sequential steps, AdoMet formation and the subsequent tripolyphosphate hydrolysis which occurs prior to release of AdoMet from the enzyme. The protein is S-adenosylmethionine synthase of Bacteroides thetaiotaomicron (strain ATCC 29148 / DSM 2079 / JCM 5827 / CCUG 10774 / NCTC 10582 / VPI-5482 / E50).